The sequence spans 324 residues: Beta-ketoacyl-[acyl-carrier-protein] synthase III (324 aa).

Residues C112 and H249 contribute to the active site. The interval Q250–R254 is ACP-binding. Residue N279 is part of the active site.

The protein belongs to the thiolase-like superfamily. FabH family. Homodimer.

It localises to the cytoplasm. The enzyme catalyses malonyl-[ACP] + acetyl-CoA + H(+) = 3-oxobutanoyl-[ACP] + CO2 + CoA. Its pathway is lipid metabolism; fatty acid biosynthesis. In terms of biological role, catalyzes the condensation reaction of fatty acid synthesis by the addition to an acyl acceptor of two carbons from malonyl-ACP. Catalyzes the first condensation reaction which initiates fatty acid synthesis and may therefore play a role in governing the total rate of fatty acid production. Possesses both acetoacetyl-ACP synthase and acetyl transacylase activities. Its substrate specificity determines the biosynthesis of branched-chain and/or straight-chain of fatty acids. The protein is Beta-ketoacyl-[acyl-carrier-protein] synthase III of Streptococcus equi subsp. equi (strain 4047).